A 222-amino-acid chain; its full sequence is Putative RING finger protein ORF118 (222 aa).

The RING-type zinc-finger motif lies at 78–114; it reads CCICMAKNNRKEALPCQHNVCRDCYYKPMRNNCPVCN. A disordered region spans residues 184-222; the sequence is IENRIHNNNNNNYDENNPDDLPVIHPPRRRHRQTAHISI. A compositionally biased stretch (low complexity) spans 189–198; sequence HNNNNNNYDE. The segment covering 209-222 has biased composition (basic residues); it reads PPRRRHRQTAHISI.

This chain is Putative RING finger protein ORF118, found in Magallana gigas (Pacific oyster).